The chain runs to 1165 residues: Chitin synthase 3 (1165 aa).

At 1–170 the chain is on the cytoplasmic side; it reads MTGLNGDDPD…ETNDTLSFWQ (170 aa). Disordered stretches follow at residues 19-53 and 74-97; these read DEESLLRSRHSVGSGAPHRQGSLVRPERSRLNNPD and PSSTGVNPNATRRSGSLRSKGSVR. The span at 74 to 92 shows a compositional bias: polar residues; sequence PSSTGVNPNATRRSGSLRS. Lys-136 is covalently cross-linked (Glycyl lysine isopeptide (Lys-Gly) (interchain with G-Cter in ubiquitin)). The chain crosses the membrane as a helical span at residues 171–191; it reads MYCYFITFWAPAPILAFCGMP. Residues 192–340 are Extracellular-facing; it reads KKERQMAWRE…PNFTVENYAG (149 aa). N-linked (GlcNAc...) asparagine glycans are attached at residues Asn-303 and Asn-332. A helical transmembrane segment spans residues 341–354; the sequence is WNCHTSKEDRDAFY. Over 355-452 the chain is Cytoplasmic; the sequence is GLKSKADVYF…SKTVGCIASD (98 aa). Residues 453 to 473 form a helical membrane-spanning segment; it reads VVLYVSLVFILSVVIIKFIIA. The Extracellular segment spans residues 474 to 891; that stretch reads CYFRWTVARK…EYYISHHQAK (418 aa). Ser-537 carries the phosphoserine modification. Thr-538 is subject to Phosphothreonine. The chain crosses the membrane as a helical span at residues 892-910; sequence AFESVFGSVTCLPGCFSMY. Over 911–1029 the chain is Cytoplasmic; that stretch reads RIKSPKGSDG…SMQFVIGIEL (119 aa). A helical transmembrane segment spans residues 1030–1050; that stretch reads IGTMVLPLAICFTIYVIIFAI. The Extracellular portion of the chain corresponds to 1051-1055; that stretch reads VSKPT. The helical transmembrane segment at 1056 to 1076 threads the bilayer; that stretch reads PVITLVLLAIILGLPGLIVVI. Residues 1077 to 1165 lie on the Cytoplasmic side of the membrane; sequence TATRWSYLWW…RKEESDSFVA (89 aa).

It belongs to the chitin synthase family. Class IV subfamily. In terms of assembly, homodimer. May form higher order oligomers. Seems to interact with BNI4 and SKT5 which link CHS3 to septins. In terms of processing, glycosylated. Palmitoylated by PFA4; required for proper export from the ER.

The protein resides in the cell membrane. The protein localises to the bud neck. It is found in the cytoplasmic vesicle membrane. The enzyme catalyses [(1-&gt;4)-N-acetyl-beta-D-glucosaminyl](n) + UDP-N-acetyl-alpha-D-glucosamine = [(1-&gt;4)-N-acetyl-beta-D-glucosaminyl](n+1) + UDP + H(+). Functionally, polymerizes chitin, a structural polymer of the cell wall and septum, by transferring the sugar moiety of UDP-GlcNAc to the non-reducing end of the growing chitin polymer. Appears to be responsible for synthesis of the majority of the chitin found in the cell wall periphery. It is involved in the synthesis of the chitin ring that forms in the cell wall just before bud emergence. This ring remains at the base of the bud as the bud grows and ultimately forms part of the bud scar marking the division site on the mother cell. Also catalyzes the synthesis of chitin laid down during mating and spore cell-wall synthesis. In Saccharomyces cerevisiae (strain ATCC 204508 / S288c) (Baker's yeast), this protein is Chitin synthase 3.